Consider the following 211-residue polypeptide: Thymidylate kinase (211 aa).

An ATP-binding site is contributed by 10 to 17; the sequence is GPDGAGKT.

This sequence belongs to the thymidylate kinase family.

It catalyses the reaction dTMP + ATP = dTDP + ADP. Phosphorylation of dTMP to form dTDP in both de novo and salvage pathways of dTTP synthesis. This is Thymidylate kinase from Lactococcus lactis subsp. cremoris (strain SK11).